We begin with the raw amino-acid sequence, 37 residues long: U4-theraphotoxin-Hhn1v (37 aa).

3 cysteine pairs are disulfide-bonded: Cys-3–Cys-17, Cys-7–Cys-28, and Cys-22–Cys-33.

Belongs to the neurotoxin 12 (Hwtx-2) family. 02 (Hwtx-2) subfamily. Expressed by the venom gland.

It is found in the secreted. In terms of biological role, postsynaptic neurotoxin. This is U4-theraphotoxin-Hhn1v from Cyriopagopus hainanus (Chinese bird spider).